Reading from the N-terminus, the 496-residue chain is Probable glycine dehydrogenase (decarboxylating) subunit 2 (496 aa).

At K265 the chain carries N6-(pyridoxal phosphate)lysine.

Belongs to the GcvP family. C-terminal subunit subfamily. The glycine cleavage system is composed of four proteins: P, T, L and H. In this organism, the P 'protein' is a heterodimer of two subunits. The cofactor is pyridoxal 5'-phosphate.

It catalyses the reaction N(6)-[(R)-lipoyl]-L-lysyl-[glycine-cleavage complex H protein] + glycine + H(+) = N(6)-[(R)-S(8)-aminomethyldihydrolipoyl]-L-lysyl-[glycine-cleavage complex H protein] + CO2. Its function is as follows. The glycine cleavage system catalyzes the degradation of glycine. The P protein binds the alpha-amino group of glycine through its pyridoxal phosphate cofactor; CO(2) is released and the remaining methylamine moiety is then transferred to the lipoamide cofactor of the H protein. In Thioalkalivibrio sulfidiphilus (strain HL-EbGR7), this protein is Probable glycine dehydrogenase (decarboxylating) subunit 2.